A 261-amino-acid chain; its full sequence is 4-hydroxy-tetrahydrodipicolinate reductase (261 aa).

NAD(+) is bound at residue glycine 9–methionine 14. An NADP(+)-binding site is contributed by arginine 36. NAD(+)-binding positions include glycine 97 to threonine 99 and serine 118 to methionine 121. Residue histidine 151 is the Proton donor/acceptor of the active site. A (S)-2,3,4,5-tetrahydrodipicolinate-binding site is contributed by histidine 152. Lysine 155 serves as the catalytic Proton donor. Position 161-162 (glycine 161–threonine 162) interacts with (S)-2,3,4,5-tetrahydrodipicolinate.

This sequence belongs to the DapB family.

It is found in the cytoplasm. It carries out the reaction (S)-2,3,4,5-tetrahydrodipicolinate + NAD(+) + H2O = (2S,4S)-4-hydroxy-2,3,4,5-tetrahydrodipicolinate + NADH + H(+). The enzyme catalyses (S)-2,3,4,5-tetrahydrodipicolinate + NADP(+) + H2O = (2S,4S)-4-hydroxy-2,3,4,5-tetrahydrodipicolinate + NADPH + H(+). It participates in amino-acid biosynthesis; L-lysine biosynthesis via DAP pathway; (S)-tetrahydrodipicolinate from L-aspartate: step 4/4. Catalyzes the conversion of 4-hydroxy-tetrahydrodipicolinate (HTPA) to tetrahydrodipicolinate. The protein is 4-hydroxy-tetrahydrodipicolinate reductase of Wolbachia sp. subsp. Drosophila simulans (strain wRi).